The chain runs to 278 residues: DNA repair protein XRCC2 (278 aa).

S10 carries the phosphoserine modification.

The protein belongs to the RecA family. RAD51 subfamily. As to quaternary structure, interacts with RAD51D. Part of the BCDX2 complex consisting of RAD51B, RAD51C, RAD51D and XRCC2; the complex has a ring-like structure arranged into a flat disk around a central channel. In the absence of DNA, the BCDX2 subcomplex XRCC2:RAD51D formed a multimeric ring structure; in the presence of single-stranded DNA it formed a filamentous structure with the ssDNA. In terms of tissue distribution, expressed at low level in somatic tissues and at high level in testis.

The protein resides in the nucleus. Involved in the homologous recombination repair (HRR) pathway of double-stranded DNA, thought to repair chromosomal fragmentation, translocations and deletions. Part of the RAD51 paralog protein complex BCDX2 which acts in the BRCA1-BRCA2-dependent HR pathway. Upon DNA damage, BCDX2 acts downstream of BRCA2 recruitment and upstream of RAD51 recruitment. BCDX2 binds predominantly to the intersection of the four duplex arms of the Holliday junction and to junction of replication forks. The BCDX2 complex was originally reported to bind single-stranded DNA, single-stranded gaps in duplex DNA and specifically to nicks in duplex DNA. This chain is DNA repair protein XRCC2 (Xrcc2), found in Mus musculus (Mouse).